Reading from the N-terminus, the 351-residue chain is GDSL esterase/lipase At3g53100 (351 aa).

A signal peptide spans 1 to 24 (MQKMRVSGFRVLLLVSCFFCKSKG). The Nucleophile role is filled by Ser36. N-linked (GlcNAc...) asparagine glycosylation is found at Asn234, Asn254, and Asn318. Residues Asp326 and His329 contribute to the active site.

Belongs to the 'GDSL' lipolytic enzyme family.

The protein resides in the secreted. In Arabidopsis thaliana (Mouse-ear cress), this protein is GDSL esterase/lipase At3g53100.